Consider the following 263-residue polypeptide: 3-deoxy-manno-octulosonate cytidylyltransferase (263 aa).

It belongs to the KdsB family.

It localises to the cytoplasm. The catalysed reaction is 3-deoxy-alpha-D-manno-oct-2-ulosonate + CTP = CMP-3-deoxy-beta-D-manno-octulosonate + diphosphate. Its pathway is nucleotide-sugar biosynthesis; CMP-3-deoxy-D-manno-octulosonate biosynthesis; CMP-3-deoxy-D-manno-octulosonate from 3-deoxy-D-manno-octulosonate and CTP: step 1/1. The protein operates within bacterial outer membrane biogenesis; lipopolysaccharide biosynthesis. Activates KDO (a required 8-carbon sugar) for incorporation into bacterial lipopolysaccharide in Gram-negative bacteria. The polypeptide is 3-deoxy-manno-octulosonate cytidylyltransferase (Burkholderia thailandensis (strain ATCC 700388 / DSM 13276 / CCUG 48851 / CIP 106301 / E264)).